Here is a 399-residue protein sequence, read N- to C-terminus: S-adenosylmethionine synthase (399 aa).

His-17 contributes to the ATP binding site. Asp-19 is a Mg(2+) binding site. Glu-45 contributes to the K(+) binding site. Glu-58 and Gln-101 together coordinate L-methionine. Positions 101 to 111 (QSPDIAQGVDE) are flexible loop. Residues 177–179 (DAK), 244–245 (RF), Asp-253, 259–260 (RK), Ala-276, and Lys-280 contribute to the ATP site. Asp-253 provides a ligand contact to L-methionine. Lys-284 is an L-methionine binding site.

This sequence belongs to the AdoMet synthase family. As to quaternary structure, homotetramer; dimer of dimers. The cofactor is Mg(2+). K(+) is required as a cofactor.

It localises to the cytoplasm. It carries out the reaction L-methionine + ATP + H2O = S-adenosyl-L-methionine + phosphate + diphosphate. It participates in amino-acid biosynthesis; S-adenosyl-L-methionine biosynthesis; S-adenosyl-L-methionine from L-methionine: step 1/1. Catalyzes the formation of S-adenosylmethionine (AdoMet) from methionine and ATP. The overall synthetic reaction is composed of two sequential steps, AdoMet formation and the subsequent tripolyphosphate hydrolysis which occurs prior to release of AdoMet from the enzyme. This chain is S-adenosylmethionine synthase, found in Listeria monocytogenes serovar 1/2a (strain ATCC BAA-679 / EGD-e).